Consider the following 228-residue polypeptide: C-type lectin domain-containing protein 88 (228 aa).

The N-terminal stretch at 1–18 is a signal peptide; that stretch reads MQFIFFGTLFSGLLLVCA. Ser27 carries an O-linked (Xyl...) (chondroitin sulfate) serine glycan. The region spanning 88–218 is the C-type lectin domain; it reads YSDSCYWVET…CTYLFYSICE (131 aa). Cystine bridges form between Cys109-Cys217 and Cys188-Cys209. Asn220 carries an N-linked (GlcNAc...) asparagine glycan.

The sequence is that of C-type lectin domain-containing protein 88 from Caenorhabditis elegans.